The sequence spans 91 residues: Small ribosomal subunit protein uS19 (91 aa).

Belongs to the universal ribosomal protein uS19 family.

Its function is as follows. Protein S19 forms a complex with S13 that binds strongly to the 16S ribosomal RNA. The protein is Small ribosomal subunit protein uS19 of Desulfotalea psychrophila (strain LSv54 / DSM 12343).